A 248-amino-acid polypeptide reads, in one-letter code: Protein maestro (248 aa).

The disordered stretch occupies residues 1–20; that stretch reads MDQRQRRILGQPLSIPTSQP. HEAT repeat units follow at residues 44–79 and 128–163; these read EPLK…AREA and SFFI…AAFA.

It is found in the nucleus. It localises to the nucleolus. In Macaca fascicularis (Crab-eating macaque), this protein is Protein maestro (MRO).